The chain runs to 397 residues: Teichoic acid D-alanine hydrolase (397 aa).

Positions 1-27 (MKFNKEKLVIHACVLLFIIISIGLVFH) are cleaved as a signal peptide.

It localises to the cell membrane. It carries out the reaction [(4-D-Ala)-(2-GlcNAc)-Rib-ol-P]n-[Gro-P]m-beta-D-ManNAc-(1-&gt;4)-alpha-D-GlcNAc-P-peptidoglycan + n H2O = [(2-GlcNAc)-Rib-ol-P]n-[Gro-P]m-beta-D-ManNAc-(1-&gt;4)-alpha-D-GlcNAc-P-peptidoglycan + n D-alanine.. Its function is as follows. Catalyzes the liberation of D-alanyl moieties present on wall teichoic acid (WTA) and lipoteichoic acid (LTA). Affects the methicillin resistance level and autolysis in the presence of Triton X-100 as well as the cell wall structure. This chain is Teichoic acid D-alanine hydrolase (fmtA), found in Staphylococcus aureus (strain MRSA252).